A 207-amino-acid polypeptide reads, in one-letter code: dTTP/UTP pyrophosphatase (207 aa).

Asp79 acts as the Proton acceptor in catalysis.

This sequence belongs to the Maf family. YhdE subfamily. Requires a divalent metal cation as cofactor.

The protein resides in the cytoplasm. The catalysed reaction is dTTP + H2O = dTMP + diphosphate + H(+). It carries out the reaction UTP + H2O = UMP + diphosphate + H(+). Nucleoside triphosphate pyrophosphatase that hydrolyzes dTTP and UTP. May have a dual role in cell division arrest and in preventing the incorporation of modified nucleotides into cellular nucleic acids. The sequence is that of dTTP/UTP pyrophosphatase from Rhodopseudomonas palustris (strain BisB5).